We begin with the raw amino-acid sequence, 396 residues long: Elongation factor Tu (396 aa).

The tr-type G domain maps to 10-205 (KPHVNIGTIG…AVDESIPDPV (196 aa)). Positions 19–26 (GHVDHGKT) are G1. GTP is bound at residue 19–26 (GHVDHGKT). Thr26 contacts Mg(2+). Residues 62–66 (GITIN) form a G2 region. The interval 83–86 (DAPG) is G3. Residues 83–87 (DAPGH) and 138–141 (NKAD) contribute to the GTP site. Residues 138-141 (NKAD) form a G4 region. The segment at 175–177 (SAL) is G5.

This sequence belongs to the TRAFAC class translation factor GTPase superfamily. Classic translation factor GTPase family. EF-Tu/EF-1A subfamily. Monomer.

Its subcellular location is the cytoplasm. It catalyses the reaction GTP + H2O = GDP + phosphate + H(+). Its function is as follows. GTP hydrolase that promotes the GTP-dependent binding of aminoacyl-tRNA to the A-site of ribosomes during protein biosynthesis. This Rhodococcus jostii (strain RHA1) protein is Elongation factor Tu.